The chain runs to 58 residues: Large ribosomal subunit protein uL30 (58 aa).

It belongs to the universal ribosomal protein uL30 family. Part of the 50S ribosomal subunit.

The protein is Large ribosomal subunit protein uL30 of Parabacteroides distasonis (strain ATCC 8503 / DSM 20701 / CIP 104284 / JCM 5825 / NCTC 11152).